Consider the following 199-residue polypeptide: MIDYIKGNLVAVEPAYLVVEANGIGFQIYCANPYRFINDLNREVVVPTHHYVREDSQRLFGFTTRTERLLFEKLLNVSGIGPKGALAILASGEPEDIIHAIEQEDEALLVRFPGVGKKTARQIILDLKGKLDDMAPMLEPAAGADKQQKNPQLEDALEALRALGYVEKELKKVEKQLKAETLETDEYIRRALALMLKRP.

Residues 1–63 (MIDYIKGNLV…EDSQRLFGFT (63 aa)) are domain I. The interval 64-142 (TRTERLLFEK…DMAPMLEPAA (79 aa)) is domain II. Residues 143-153 (GADKQQKNPQL) are flexible linker. The segment at 153 to 199 (LEDALEALRALGYVEKELKKVEKQLKAETLETDEYIRRALALMLKRP) is domain III.

The protein belongs to the RuvA family. Homotetramer. Forms an RuvA(8)-RuvB(12)-Holliday junction (HJ) complex. HJ DNA is sandwiched between 2 RuvA tetramers; dsDNA enters through RuvA and exits via RuvB. An RuvB hexamer assembles on each DNA strand where it exits the tetramer. Each RuvB hexamer is contacted by two RuvA subunits (via domain III) on 2 adjacent RuvB subunits; this complex drives branch migration. In the full resolvosome a probable DNA-RuvA(4)-RuvB(12)-RuvC(2) complex forms which resolves the HJ.

It localises to the cytoplasm. Functionally, the RuvA-RuvB-RuvC complex processes Holliday junction (HJ) DNA during genetic recombination and DNA repair, while the RuvA-RuvB complex plays an important role in the rescue of blocked DNA replication forks via replication fork reversal (RFR). RuvA specifically binds to HJ cruciform DNA, conferring on it an open structure. The RuvB hexamer acts as an ATP-dependent pump, pulling dsDNA into and through the RuvAB complex. HJ branch migration allows RuvC to scan DNA until it finds its consensus sequence, where it cleaves and resolves the cruciform DNA. This chain is Holliday junction branch migration complex subunit RuvA, found in Shouchella clausii (strain KSM-K16) (Alkalihalobacillus clausii).